The primary structure comprises 344 residues: GTP 3',8-cyclase (344 aa).

Positions 19 to 244 (PFGRTISYLR…MDLAESTGGP (226 aa)) constitute a Radical SAM core domain. Arginine 28 provides a ligand contact to GTP. 2 residues coordinate [4Fe-4S] cluster: cysteine 35 and cysteine 39. Tyrosine 41 lines the S-adenosyl-L-methionine pocket. A [4Fe-4S] cluster-binding site is contributed by cysteine 42. Arginine 77 lines the GTP pocket. Residue glycine 81 participates in S-adenosyl-L-methionine binding. Residue threonine 111 participates in GTP binding. An S-adenosyl-L-methionine-binding site is contributed by serine 135. GTP is bound at residue lysine 171. Methionine 205 lines the S-adenosyl-L-methionine pocket. [4Fe-4S] cluster contacts are provided by cysteine 268 and cysteine 271. A GTP-binding site is contributed by 273–275 (RVR). Cysteine 285 provides a ligand contact to [4Fe-4S] cluster.

Belongs to the radical SAM superfamily. MoaA family. As to quaternary structure, monomer and homodimer. The cofactor is [4Fe-4S] cluster.

The catalysed reaction is GTP + AH2 + S-adenosyl-L-methionine = (8S)-3',8-cyclo-7,8-dihydroguanosine 5'-triphosphate + 5'-deoxyadenosine + L-methionine + A + H(+). The protein operates within cofactor biosynthesis; molybdopterin biosynthesis. Its function is as follows. Catalyzes the cyclization of GTP to (8S)-3',8-cyclo-7,8-dihydroguanosine 5'-triphosphate. The protein is GTP 3',8-cyclase of Bradyrhizobium diazoefficiens (strain JCM 10833 / BCRC 13528 / IAM 13628 / NBRC 14792 / USDA 110).